The following is a 164-amino-acid chain: MEMTSTQRLILANQYRLMGLLDPTNTQKYQRLEAIVKGGFGLELKELDKEFSDLSEAECLTVLNTLEMYNALQISYNNLPDKSALTPHRLQFAGYCAVREKKYLNYLRFITSVEGKYQEFMRCEHGCDSQTPMWDKYLKMLDAWRACPHEYHLSMAEIQKILNA.

This sequence belongs to the UPF0304 family.

This chain is UPF0304 protein HSM_1818, found in Histophilus somni (strain 2336) (Haemophilus somnus).